Consider the following 221-residue polypeptide: Extracellular superoxide dismutase [Cu-Zn] (221 aa).

The first 19 residues, 1–19 (MKTRVVLILALSVCIEAAS), serve as a signal peptide directing secretion. Asn56 is a glycosylation site (N-linked (GlcNAc...) asparagine). 3 residues coordinate Cu cation: His70, His72, and His87. Cys81 and Cys170 form a disulfide bridge. Zn(2+) is bound by residues His87, His95, His104, and Asp107. His144 is a binding site for Cu cation.

Belongs to the Cu-Zn superoxide dismutase family. Cu cation is required as a cofactor. Requires Zn(2+) as cofactor. Isoform 2 is preferentially expressed in eggs.

The protein resides in the secreted. It localises to the extracellular space. It is found in the membrane. It carries out the reaction 2 superoxide + 2 H(+) = H2O2 + O2. Its function is as follows. Protects cells against oxidative stress by converting superoxide radicals to hydrogen peroxide. Oxidative stress is involved in various biological dysfunctions and senescence. This is Extracellular superoxide dismutase [Cu-Zn] (sod-4) from Caenorhabditis elegans.